A 96-amino-acid chain; its full sequence is Large ribosomal subunit protein bL27 (96 aa).

Residues Met-1–Phe-9 constitute a propeptide that is removed on maturation.

It belongs to the bacterial ribosomal protein bL27 family. The N-terminus is cleaved by ribosomal processing cysteine protease Prp.

The polypeptide is Large ribosomal subunit protein bL27 (Anoxybacillus flavithermus (strain DSM 21510 / WK1)).